The sequence spans 209 residues: ATP phosphoribosyltransferase (209 aa).

Belongs to the ATP phosphoribosyltransferase family. Short subfamily. Heteromultimer composed of HisG and HisZ subunits.

It is found in the cytoplasm. The enzyme catalyses 1-(5-phospho-beta-D-ribosyl)-ATP + diphosphate = 5-phospho-alpha-D-ribose 1-diphosphate + ATP. It participates in amino-acid biosynthesis; L-histidine biosynthesis; L-histidine from 5-phospho-alpha-D-ribose 1-diphosphate: step 1/9. Functionally, catalyzes the condensation of ATP and 5-phosphoribose 1-diphosphate to form N'-(5'-phosphoribosyl)-ATP (PR-ATP). Has a crucial role in the pathway because the rate of histidine biosynthesis seems to be controlled primarily by regulation of HisG enzymatic activity. The sequence is that of ATP phosphoribosyltransferase from Caldicellulosiruptor bescii (strain ATCC BAA-1888 / DSM 6725 / KCTC 15123 / Z-1320) (Anaerocellum thermophilum).